The following is a 55-amino-acid chain: ATP synthase protein 8 (55 aa).

The helical transmembrane segment at Leu-11–Leu-31 threads the bilayer.

The protein belongs to the ATPase protein 8 family. As to quaternary structure, F-type ATPases have 2 components, CF(1) - the catalytic core - and CF(0) - the membrane proton channel.

It localises to the mitochondrion membrane. Functionally, mitochondrial membrane ATP synthase (F(1)F(0) ATP synthase or Complex V) produces ATP from ADP in the presence of a proton gradient across the membrane which is generated by electron transport complexes of the respiratory chain. F-type ATPases consist of two structural domains, F(1) - containing the extramembraneous catalytic core and F(0) - containing the membrane proton channel, linked together by a central stalk and a peripheral stalk. During catalysis, ATP synthesis in the catalytic domain of F(1) is coupled via a rotary mechanism of the central stalk subunits to proton translocation. Part of the complex F(0) domain. Minor subunit located with subunit a in the membrane. This chain is ATP synthase protein 8 (MT-ATP8), found in Albinaria caerulea (Land snail).